Consider the following 547-residue polypeptide: uncharacterized protein (547 aa).

The Extracellular segment spans residues 1–21; it reads MVKKHQNSKMGNTNHFGHLKS. The chain crosses the membrane as a helical span at residues 22–42; that stretch reads FVGGNVVALGAGTPYLFSFYA. At 43 to 58 the chain is on the cytoplasmic side; that stretch reads PQLLSKCHIPVSASSK. The helical transmembrane segment at 59 to 79 threads the bilayer; it reads LSFSLTIGSSLMGILAGIVVD. The Extracellular portion of the chain corresponds to 80–83; the sequence is RSPK. Residues 84–104 traverse the membrane as a helical segment; sequence LSCLIGSMCVFIAYLILNLCY. At 105 to 110 the chain is on the cytoplasmic side; it reads KHEWSS. The chain crosses the membrane as a helical span at residues 111–131; sequence TFLISLSLVLIGYGSVSGFYA. At 132–144 the chain is on the extracellular side; it reads SVKCANTNFPQHR. Residues 145-165 form a helical membrane-spanning segment; it reads GTAGAFPVSLYGLSGMVFSYL. Over 166–175 the chain is Cytoplasmic; it reads CSKLFGENIE. The chain crosses the membrane as a helical span at residues 176-196; sequence HVFIFLMVACGCMILVGYFSL. Residues 197-323 lie on the Extracellular side of the membrane; it reads DIFSNAEGDD…LKSSTFIGYY (127 aa). Ser-237 carries the post-translational modification Phosphoserine. A disordered region spans residues 275-300; it reads LLSPSSPHTKYDFEDENTSKNTVGEN. A helical transmembrane segment spans residues 324-344; it reads IVLGILQGVGLMYIYSVGFMV. Residues 345–398 are Cytoplasmic-facing; the sequence is QAQVSTPPLNQLPINAEKIQSLQVTLLSLLSFCGRLSSGPISDFLVKKFKAQRL. Residues 399–419 traverse the membrane as a helical segment; it reads WNIVIASLLVFLASNKISHDF. The Extracellular segment spans residues 420-437; the sequence is SSIEDPSLRASKSFKNIS. The chain crosses the membrane as a helical span at residues 438–458; that stretch reads VCSAIFGYSFGVLFGTFPSIV. Residues 459–469 lie on the Cytoplasmic side of the membrane; it reads ADRFGTNGYST. A helical membrane pass occupies residues 470 to 490; that stretch reads LWGVLTTGGVFSVSVFTDILG. At 491–514 the chain is on the extracellular side; that stretch reads RDFKANTGDDDGNCKKGVLCYSYT. The chain crosses the membrane as a helical span at residues 515-535; that stretch reads FMVTKYCAAFNLLFVLGIIGY. Residues 536–547 are Cytoplasmic-facing; sequence TYYRRRATANSL.

Its subcellular location is the membrane. This is an uncharacterized protein from Saccharomyces cerevisiae (strain ATCC 204508 / S288c) (Baker's yeast).